The primary structure comprises 347 residues: Dual-specificity RNA methyltransferase RlmN (347 aa).

The Proton acceptor role is filled by Glu93. The region spanning 99 to 327 is the Radical SAM core domain; the sequence is DEGRNTLCIS…VITRDSRGSD (229 aa). Residues Cys106 and Cys332 are joined by a disulfide bond. [4Fe-4S] cluster-binding residues include Cys113, Cys117, and Cys120. S-adenosyl-L-methionine is bound by residues 158–159, Ser190, 213–215, and Asn289; these read GE and SLN. The S-methylcysteine intermediate role is filled by Cys332.

Belongs to the radical SAM superfamily. RlmN family. [4Fe-4S] cluster serves as cofactor.

The protein resides in the cytoplasm. It catalyses the reaction adenosine(2503) in 23S rRNA + 2 reduced [2Fe-2S]-[ferredoxin] + 2 S-adenosyl-L-methionine = 2-methyladenosine(2503) in 23S rRNA + 5'-deoxyadenosine + L-methionine + 2 oxidized [2Fe-2S]-[ferredoxin] + S-adenosyl-L-homocysteine. The catalysed reaction is adenosine(37) in tRNA + 2 reduced [2Fe-2S]-[ferredoxin] + 2 S-adenosyl-L-methionine = 2-methyladenosine(37) in tRNA + 5'-deoxyadenosine + L-methionine + 2 oxidized [2Fe-2S]-[ferredoxin] + S-adenosyl-L-homocysteine. Specifically methylates position 2 of adenine 2503 in 23S rRNA and position 2 of adenine 37 in tRNAs. m2A2503 modification seems to play a crucial role in the proofreading step occurring at the peptidyl transferase center and thus would serve to optimize ribosomal fidelity. This chain is Dual-specificity RNA methyltransferase RlmN, found in Pelobacter propionicus (strain DSM 2379 / NBRC 103807 / OttBd1).